The following is a 313-amino-acid chain: tRNA dimethylallyltransferase (313 aa).

Position 11-18 (11-18 (GPTACGKT)) interacts with ATP. 13 to 18 (TACGKT) is a binding site for substrate. 3 interaction with substrate tRNA regions span residues 36-39 (DSAL), 160-164 (QRIER), and 243-248 (RCVGYR).

This sequence belongs to the IPP transferase family. Monomer. Requires Mg(2+) as cofactor.

The enzyme catalyses adenosine(37) in tRNA + dimethylallyl diphosphate = N(6)-dimethylallyladenosine(37) in tRNA + diphosphate. In terms of biological role, catalyzes the transfer of a dimethylallyl group onto the adenine at position 37 in tRNAs that read codons beginning with uridine, leading to the formation of N6-(dimethylallyl)adenosine (i(6)A). This Neisseria meningitidis serogroup C (strain 053442) protein is tRNA dimethylallyltransferase.